The sequence spans 435 residues: Serine--tRNA ligase (435 aa).

Residue 234–236 (TAE) coordinates L-serine. 265-267 (RRE) serves as a coordination point for ATP. E288 is an L-serine binding site. Residue 352–355 (EISS) participates in ATP binding. S388 contacts L-serine.

This sequence belongs to the class-II aminoacyl-tRNA synthetase family. Type-1 seryl-tRNA synthetase subfamily. As to quaternary structure, homodimer. The tRNA molecule binds across the dimer.

Its subcellular location is the cytoplasm. It carries out the reaction tRNA(Ser) + L-serine + ATP = L-seryl-tRNA(Ser) + AMP + diphosphate + H(+). The enzyme catalyses tRNA(Sec) + L-serine + ATP = L-seryl-tRNA(Sec) + AMP + diphosphate + H(+). It functions in the pathway aminoacyl-tRNA biosynthesis; selenocysteinyl-tRNA(Sec) biosynthesis; L-seryl-tRNA(Sec) from L-serine and tRNA(Sec): step 1/1. In terms of biological role, catalyzes the attachment of serine to tRNA(Ser). Is also able to aminoacylate tRNA(Sec) with serine, to form the misacylated tRNA L-seryl-tRNA(Sec), which will be further converted into selenocysteinyl-tRNA(Sec). This is Serine--tRNA ligase from Synechococcus sp. (strain JA-2-3B'a(2-13)) (Cyanobacteria bacterium Yellowstone B-Prime).